The primary structure comprises 539 residues: Transcription factor LG2 (539 aa).

Polar residues predominate over residues 115-125 (MRQQQQLHSGN). Disordered stretches follow at residues 115-140 (MRQQ…SAQN) and 181-246 (KPGL…KSRL). Composition is skewed to low complexity over residues 126-137 (SQSVGSTTDSSS) and 192-205 (QQQH…QQQL). The segment covering 219 to 242 (TRKDGKSVDAKTERRLAQNREAAR) has biased composition (basic and acidic residues). Residues 227 to 271 (DAKTERRLAQNREAARKSRLRKKAYVQNLETSRVRLQQIEQELQR) enclose the bZIP domain. The segment at 229–249 (KTERRLAQNREAARKSRLRKK) is basic motif. The tract at residues 255 to 269 (LETSRVRLQQIEQEL) is leucine-zipper. The DOG1 domain maps to 292-506 (AAMFDMEYAR…RALSNLWSSR (215 aa)). Residues 513-539 (GTESVSPTGTELQPMHNQPQQNQYSGF) form a disordered region.

It belongs to the bZIP family. In terms of assembly, interacts with NPR1/NH1 and NPR3/NH3.

The protein localises to the nucleus. In terms of biological role, transcriptional regulator involved in defense response. Acts as a transcriptional activator in vitro. This chain is Transcription factor LG2, found in Oryza sativa subsp. japonica (Rice).